Here is a 399-residue protein sequence, read N- to C-terminus: Sister chromatid cohesion protein DCC1 (399 aa).

The protein belongs to the DCC1 family. In terms of assembly, component of the CTF18-RFC complex which consists of CTF8, CTF18, DSCC1 and the RFC complex. Interacts with CTF8 and CTF18. Interacts with DDX11.

Its subcellular location is the nucleus. Its function is as follows. Loads PCNA onto primed templates regulating velocity, spacing and restart activity of replication forks. May couple DNA replication to sister chromatid cohesion through regulation of the acetylation of the cohesin subunit SMC3. The chain is Sister chromatid cohesion protein DCC1 (DSCC1) from Mus musculus (Mouse).